A 582-amino-acid chain; its full sequence is Formate--tetrahydrofolate ligase (582 aa).

65–72 (TPLGEGKT) serves as a coordination point for ATP.

The protein belongs to the formate--tetrahydrofolate ligase family.

The enzyme catalyses (6S)-5,6,7,8-tetrahydrofolate + formate + ATP = (6R)-10-formyltetrahydrofolate + ADP + phosphate. Its pathway is one-carbon metabolism; tetrahydrofolate interconversion. This Vibrio parahaemolyticus serotype O3:K6 (strain RIMD 2210633) protein is Formate--tetrahydrofolate ligase.